We begin with the raw amino-acid sequence, 1341 residues long: DNA-directed RNA polymerase subunit beta (1341 aa).

The protein belongs to the RNA polymerase beta chain family. In terms of assembly, the RNAP catalytic core consists of 2 alpha, 1 beta, 1 beta' and 1 omega subunit. When a sigma factor is associated with the core the holoenzyme is formed, which can initiate transcription.

It carries out the reaction RNA(n) + a ribonucleoside 5'-triphosphate = RNA(n+1) + diphosphate. In terms of biological role, DNA-dependent RNA polymerase catalyzes the transcription of DNA into RNA using the four ribonucleoside triphosphates as substrates. In Blochmanniella pennsylvanica (strain BPEN), this protein is DNA-directed RNA polymerase subunit beta.